The sequence spans 221 residues: Large ribosomal subunit protein bL25 (221 aa).

Residues 174 to 221 (SVVTVVPPTDEPTEEEVEAMEGEAATEEPEVVGEEKEEDSEEENKDEE) are disordered. Residues 184-221 (EPTEEEVEAMEGEAATEEPEVVGEEKEEDSEEENKDEE) show a composition bias toward acidic residues.

This sequence belongs to the bacterial ribosomal protein bL25 family. CTC subfamily. In terms of assembly, part of the 50S ribosomal subunit; part of the 5S rRNA/L5/L18/L25 subcomplex. Contacts the 5S rRNA. Binds to the 5S rRNA independently of L5 and L18.

Its function is as follows. This is one of the proteins that binds to the 5S RNA in the ribosome where it forms part of the central protuberance. This is Large ribosomal subunit protein bL25 from Staphylococcus haemolyticus (strain JCSC1435).